The following is a 166-amino-acid chain: MTESTSRRPAYARLLDRAVRILAVRDHSEQELRRKLAAPIMGKNGPEEIDATAEDYERVIAWCHEHGYLDDSRFVARFIASRSRKGYGPARIRQELNQKGISREATEKAMRECDIDWCALARDQVTRKYGEPLPTVFSEKVKIQRFLLYRGYLMEDIQDIWRNFAD.

Belongs to the RecX family.

Its subcellular location is the cytoplasm. Functionally, modulates RecA activity. In Escherichia coli (strain SE11), this protein is Regulatory protein RecX.